Here is a 348-residue protein sequence, read N- to C-terminus: Mitochondrial glycine transporter (348 aa).

Solcar repeat units lie at residues 10–94 (TKST…IREN), 130–214 (LSNT…SKQH), and 249–333 (RAAS…LIRR). The next 6 membrane-spanning stretches (helical) occupy residues 16-41 (FVAG…TRVQ), 69-95 (GTLP…RENA), 136-161 (LLAG…VRYE), 189-212 (GFGA…EKSK), 253-279 (INFA…KTRI), and 308-326 (GLAL…AWTV).

Belongs to the mitochondrial carrier (TC 2.A.29) family. SLC25A38 subfamily.

Its subcellular location is the mitochondrion inner membrane. It catalyses the reaction glycine(in) = glycine(out). Its function is as follows. Mitochondrial glycine transporter that imports glycine into the mitochondrial matrix. Plays an important role in providing glycine for the first enzymatic step in heme biosynthesis, the condensation of glycine with succinyl-CoA to produce 5-aminolevulinate (ALA) in the mitochondrial matrix. The chain is Mitochondrial glycine transporter (mic-13) from Neurospora crassa (strain ATCC 24698 / 74-OR23-1A / CBS 708.71 / DSM 1257 / FGSC 987).